A 439-amino-acid chain; its full sequence is Trigger factor (439 aa).

The 86-residue stretch at 163–248 folds into the PPIase FKBP-type domain; it reads GDIAVIDFEG…LNQIKERVLP (86 aa).

It belongs to the FKBP-type PPIase family. Tig subfamily.

Its subcellular location is the cytoplasm. The catalysed reaction is [protein]-peptidylproline (omega=180) = [protein]-peptidylproline (omega=0). In terms of biological role, involved in protein export. Acts as a chaperone by maintaining the newly synthesized protein in an open conformation. Functions as a peptidyl-prolyl cis-trans isomerase. The polypeptide is Trigger factor (Syntrophotalea carbinolica (strain DSM 2380 / NBRC 103641 / GraBd1) (Pelobacter carbinolicus)).